We begin with the raw amino-acid sequence, 364 residues long: UDP-N-acetylglucosamine--N-acetylmuramyl-(pentapeptide) pyrophosphoryl-undecaprenol N-acetylglucosamine transferase (364 aa).

UDP-N-acetyl-alpha-D-glucosamine-binding positions include 10-12, asparagine 126, arginine 167, serine 199, isoleucine 253, and glutamine 298; that span reads TGG.

Belongs to the glycosyltransferase 28 family. MurG subfamily.

The protein localises to the cell inner membrane. It carries out the reaction di-trans,octa-cis-undecaprenyl diphospho-N-acetyl-alpha-D-muramoyl-L-alanyl-D-glutamyl-meso-2,6-diaminopimeloyl-D-alanyl-D-alanine + UDP-N-acetyl-alpha-D-glucosamine = di-trans,octa-cis-undecaprenyl diphospho-[N-acetyl-alpha-D-glucosaminyl-(1-&gt;4)]-N-acetyl-alpha-D-muramoyl-L-alanyl-D-glutamyl-meso-2,6-diaminopimeloyl-D-alanyl-D-alanine + UDP + H(+). It participates in cell wall biogenesis; peptidoglycan biosynthesis. Its function is as follows. Cell wall formation. Catalyzes the transfer of a GlcNAc subunit on undecaprenyl-pyrophosphoryl-MurNAc-pentapeptide (lipid intermediate I) to form undecaprenyl-pyrophosphoryl-MurNAc-(pentapeptide)GlcNAc (lipid intermediate II). The sequence is that of UDP-N-acetylglucosamine--N-acetylmuramyl-(pentapeptide) pyrophosphoryl-undecaprenol N-acetylglucosamine transferase from Amoebophilus asiaticus (strain 5a2).